Reading from the N-terminus, the 536-residue chain is Chaperonin GroEL (536 aa).

ATP is bound by residues 29 to 32 (TLGP), 86 to 90 (DGTTT), Gly412, and Asp493.

Belongs to the chaperonin (HSP60) family. In terms of assembly, forms a cylinder of 14 subunits composed of two heptameric rings stacked back-to-back. Interacts with the co-chaperonin GroES.

The protein localises to the cytoplasm. It catalyses the reaction ATP + H2O + a folded polypeptide = ADP + phosphate + an unfolded polypeptide.. Together with its co-chaperonin GroES, plays an essential role in assisting protein folding. The GroEL-GroES system forms a nano-cage that allows encapsulation of the non-native substrate proteins and provides a physical environment optimized to promote and accelerate protein folding. This is Chaperonin GroEL from Onion yellows phytoplasma (strain OY-M).